Consider the following 351-residue polypeptide: Homeobox-leucine zipper protein HOX23 (351 aa).

Residues 34–128 (LQDHAHGGHG…SFESGNKLEP (95 aa)) form a disordered region. Residues 56-65 (SPFLPDLAMD) are compositionally biased toward low complexity. Positions 101 to 160 (GGEKKRRLSVEQVRTLERSFESGNKLEPERKAQLARALGLQPRQVAIWFQNRRARWKTKQ) form a DNA-binding region, homeobox. Residues 114–128 (RTLERSFESGNKLEP) show a composition bias toward basic and acidic residues. The tract at residues 159–203 (KQLEKDFDALRRQLDAARAENDALLSLNSKLHAEIVALKGGAAAA) is leucine-zipper. The disordered stretch occupies residues 227–263 (EASCSNRSENSSEINLDISRPAPPPPPPPANESPVNR). A compositionally biased stretch (polar residues) spans 228–240 (ASCSNRSENSSEI). Positions 247-257 (PAPPPPPPPAN) are enriched in pro residues.

Belongs to the HD-ZIP homeobox family. Class I subfamily. Expressed in seedlings, roots, stems, leaf sheaths and panicles.

The protein localises to the nucleus. In terms of biological role, probable transcription factor. This Oryza sativa subsp. indica (Rice) protein is Homeobox-leucine zipper protein HOX23 (HOX23).